The chain runs to 128 residues: Probable 4-amino-4-deoxy-L-arabinose-phosphoundecaprenol flippase subunit ArnF (128 aa).

Residues methionine 1–glycine 5 are Cytoplasmic-facing. A helical membrane pass occupies residues tryptophan 6–methionine 26. Topologically, residues asparagine 27–glutamine 47 are periplasmic. Residues phenylalanine 48–alanine 68 traverse the membrane as a helical segment. At leucine 69–alanine 77 the chain is on the cytoplasmic side. Residues tyrosine 78–phenylalanine 98 traverse the membrane as a helical segment. Over serine 99 to serine 101 the chain is Periplasmic. Residues alanine 102–threonine 122 form a helical membrane-spanning segment. The Cytoplasmic segment spans residues lysine 123–aspartate 128.

This sequence belongs to the ArnF family. As to quaternary structure, heterodimer of ArnE and ArnF.

It is found in the cell inner membrane. It functions in the pathway bacterial outer membrane biogenesis; lipopolysaccharide biosynthesis. Functionally, translocates 4-amino-4-deoxy-L-arabinose-phosphoundecaprenol (alpha-L-Ara4N-phosphoundecaprenol) from the cytoplasmic to the periplasmic side of the inner membrane. This chain is Probable 4-amino-4-deoxy-L-arabinose-phosphoundecaprenol flippase subunit ArnF, found in Yersinia enterocolitica serotype O:8 / biotype 1B (strain NCTC 13174 / 8081).